We begin with the raw amino-acid sequence, 247 residues long: tRNA pseudouridine synthase A (247 aa).

Asp-52 (nucleophile) is an active-site residue. Tyr-111 lines the substrate pocket.

It belongs to the tRNA pseudouridine synthase TruA family. As to quaternary structure, homodimer.

It carries out the reaction uridine(38/39/40) in tRNA = pseudouridine(38/39/40) in tRNA. Its function is as follows. Formation of pseudouridine at positions 38, 39 and 40 in the anticodon stem and loop of transfer RNAs. The protein is tRNA pseudouridine synthase A of Caulobacter vibrioides (strain ATCC 19089 / CIP 103742 / CB 15) (Caulobacter crescentus).